Consider the following 804-residue polypeptide: Mechanosensitive cation channel TMEM63A (804 aa).

Residues 1–51 (MTSSPFLDPWPSKAVFVRERLGLGERPNDSYCYNSAKNSTVLQGVTFGGIP) lie on the Extracellular side of the membrane. Asn-38 is a glycosylation site (N-linked (GlcNAc...) asparagine). The helical transmembrane segment at 52–74 (TVLLLDVSCFLFLILVFSIIRRR) threads the bilayer. At 75-133 (FWDYGRIALVSEAGSEARFQRLSSSSSGQQDFENELGCCPWLTAIFRLHDDQILEWCGE) the chain is on the cytoplasmic side. A helical membrane pass occupies residues 134 to 166 (DAIHYLSFQRHIIFLLVVISFLSLCVILPVNLS). At 167 to 190 (GDLLGKDPYSFGRTTIANLQTDND) the chain is on the extracellular side. A helical membrane pass occupies residues 191–216 (LLWLHTVFSVIYLFLTVGFMWHHTRS). Residues 217-415 (IRYKEESLVR…CWKNLSIQGV (199 aa)) are Cytoplasmic-facing. An intracellular linker IL2; confers mechanosensitivity region spans residues 218 to 413 (RYKEESLVRQ…DICWKNLSIQ (196 aa)). Residues 416-443 (RWWLQWLGINFSLFVVLFFLTTPSIIMS) traverse the membrane as a helical segment. Residues 444 to 461 (TMDKFNVTKPIHALNNPV) lie on the Extracellular side of the membrane. N-linked (GlcNAc...) asparagine glycosylation occurs at Asn-449. A helical transmembrane segment spans residues 462–489 (ISQFFPTLLLWSFSALLPSIVYYSTLLE). Residues 490-494 (SHWTR) are Cytoplasmic-facing. A helical membrane pass occupies residues 495 to 531 (SGENRIMVSKVYIFLIFMVLILPSLGLTSLDFFFRWL). Over 532-553 (FDKTSSETSIRLECVFLPDQGA) the chain is Extracellular. Residues 554–585 (FFVNYVIASAFIGSGMELLRLPGLILYTFRMI) form a helical membrane-spanning segment. The interval 554–585 (FFVNYVIASAFIGSGMELLRLPGLILYTFRMI) is gating helix. The Cytoplasmic segment spans residues 586 to 605 (MAKTAADRRNVKQNQAFEYE). Residues 606-623 (FGAMYAWMLCVFTVIMAY) form a helical membrane-spanning segment. Over 624-627 (SITC) the chain is Extracellular. A helical membrane pass occupies residues 628–650 (PIIVPFGLIYILLKHMVDRHNLY). At 651 to 660 (FAYLPAKLEK) the chain is on the cytoplasmic side. The chain crosses the membrane as a helical span at residues 661–688 (RIHFAAVNQALAAPILCLFWLFFFSFLR). At 689–693 (LGLTA) the chain is on the extracellular side. A helical transmembrane segment spans residues 694-708 (PATLFTFLVVLLTIL). The Cytoplasmic segment spans residues 709–804 (ACLLYTCFGC…GTAAYAYQES (96 aa)). Ser-738 carries the phosphoserine modification.

Belongs to the CSC1 (TC 1.A.17) family. Monomer. In terms of processing, N-Glycosylated.

The protein resides in the lysosome membrane. It is found in the early endosome membrane. The protein localises to the cell membrane. The enzyme catalyses Ca(2+)(in) = Ca(2+)(out). Functionally, mechanosensitive cation channel with low conductance and high activation threshold. In contrast to TMEM63B, does not show phospholipid scramblase activity. Acts as a regulator of lysosomal morphology by mediating lysosomal mechanosensitivity. Important for the baby's first breath and respiration throughout life. Upon lung inflation conducts cation currents in alveolar type 1 and 2 cells triggering lamellar body exocytosis and surfactant secretion into airspace. Also acts as an osmosensitive cation channel preferentially activated by hypotonic stress. The sequence is that of Mechanosensitive cation channel TMEM63A from Mus musculus (Mouse).